A 116-amino-acid chain; its full sequence is Small ribosomal subunit protein uS13m (116 aa).

This sequence belongs to the universal ribosomal protein uS13 family. Part of the small ribosomal subunit.

It localises to the mitochondrion. Its function is as follows. Located at the top of the head of the small subunit, it contacts several helices of the 18S rRNA. This is Small ribosomal subunit protein uS13m (RPS13) from Nicotiana tabacum (Common tobacco).